The following is a 487-amino-acid chain: UDP-N-acetylmuramoyl-L-alanyl-D-glutamate--2,6-diaminopimelate ligase (487 aa).

Residues Leu23 and Ser25 each contribute to the UDP-N-acetyl-alpha-D-muramoyl-L-alanyl-D-glutamate site. 108-114 is an ATP binding site; it reads GTNGKTS. UDP-N-acetyl-alpha-D-muramoyl-L-alanyl-D-glutamate contacts are provided by residues 150 to 151, Ser177, Gln183, and Arg185; that span reads TT. Lys217 is modified (N6-carboxylysine). Meso-2,6-diaminopimelate contacts are provided by residues Arg378, 402 to 405, Gly453, and Glu457; that span reads DNPR. Positions 402-405 match the Meso-diaminopimelate recognition motif motif; that stretch reads DNPR.

The protein belongs to the MurCDEF family. MurE subfamily. Mg(2+) is required as a cofactor. In terms of processing, carboxylation is probably crucial for Mg(2+) binding and, consequently, for the gamma-phosphate positioning of ATP.

It localises to the cytoplasm. It catalyses the reaction UDP-N-acetyl-alpha-D-muramoyl-L-alanyl-D-glutamate + meso-2,6-diaminopimelate + ATP = UDP-N-acetyl-alpha-D-muramoyl-L-alanyl-gamma-D-glutamyl-meso-2,6-diaminopimelate + ADP + phosphate + H(+). It participates in cell wall biogenesis; peptidoglycan biosynthesis. Functionally, catalyzes the addition of meso-diaminopimelic acid to the nucleotide precursor UDP-N-acetylmuramoyl-L-alanyl-D-glutamate (UMAG) in the biosynthesis of bacterial cell-wall peptidoglycan. This chain is UDP-N-acetylmuramoyl-L-alanyl-D-glutamate--2,6-diaminopimelate ligase, found in Pseudomonas syringae pv. tomato (strain ATCC BAA-871 / DC3000).